We begin with the raw amino-acid sequence, 343 residues long: GTP 3',8-cyclase (343 aa).

The region spanning 19 to 244 (PYGRTISYLR…TDVDDSTGGP (226 aa)) is the Radical SAM core domain. R28 is a GTP binding site. Residues C35 and C39 each contribute to the [4Fe-4S] cluster site. Y41 lines the S-adenosyl-L-methionine pocket. Residue C42 participates in [4Fe-4S] cluster binding. Residue R77 coordinates GTP. An S-adenosyl-L-methionine-binding site is contributed by G81. T111 contributes to the GTP binding site. An S-adenosyl-L-methionine-binding site is contributed by S135. A GTP-binding site is contributed by K171. M205 lines the S-adenosyl-L-methionine pocket. Residues C268 and C271 each coordinate [4Fe-4S] cluster. 273–275 (RVR) is a binding site for GTP. C285 serves as a coordination point for [4Fe-4S] cluster.

The protein belongs to the radical SAM superfamily. MoaA family. In terms of assembly, monomer and homodimer. Requires [4Fe-4S] cluster as cofactor.

It carries out the reaction GTP + AH2 + S-adenosyl-L-methionine = (8S)-3',8-cyclo-7,8-dihydroguanosine 5'-triphosphate + 5'-deoxyadenosine + L-methionine + A + H(+). It participates in cofactor biosynthesis; molybdopterin biosynthesis. Its function is as follows. Catalyzes the cyclization of GTP to (8S)-3',8-cyclo-7,8-dihydroguanosine 5'-triphosphate. This chain is GTP 3',8-cyclase, found in Nitrobacter hamburgensis (strain DSM 10229 / NCIMB 13809 / X14).